The following is a 149-amino-acid chain: MKSVDLKILDARMREYLPAYATPGSAGLDLRACTEASLVIEPGQTVLVPTGLAIHIGDPRYAAMILPRSGLGHKHGIVLGNLVGLIDSDYQGQLMVSTWNRGTQPFTLDPMERLAQLVIVPVQQVAFNVVEDFDASERGAGGFGSTGRA.

Substrate contacts are provided by residues 68-70 (RSG), N81, 85-87 (LID), and M95.

Belongs to the dUTPase family. Mg(2+) serves as cofactor.

It carries out the reaction dUTP + H2O = dUMP + diphosphate + H(+). The protein operates within pyrimidine metabolism; dUMP biosynthesis; dUMP from dCTP (dUTP route): step 2/2. Functionally, this enzyme is involved in nucleotide metabolism: it produces dUMP, the immediate precursor of thymidine nucleotides and it decreases the intracellular concentration of dUTP so that uracil cannot be incorporated into DNA. The protein is Deoxyuridine 5'-triphosphate nucleotidohydrolase of Bordetella bronchiseptica (strain ATCC BAA-588 / NCTC 13252 / RB50) (Alcaligenes bronchisepticus).